The primary structure comprises 309 residues: Aspartate carbamoyltransferase catalytic subunit (309 aa).

Positions 56 and 57 each coordinate carbamoyl phosphate. K84 serves as a coordination point for L-aspartate. Positions 106, 136, and 139 each coordinate carbamoyl phosphate. R169 and R221 together coordinate L-aspartate. Residues A264 and P265 each coordinate carbamoyl phosphate.

The protein belongs to the aspartate/ornithine carbamoyltransferase superfamily. ATCase family. In terms of assembly, heterododecamer (2C3:3R2) of six catalytic PyrB chains organized as two trimers (C3), and six regulatory PyrI chains organized as three dimers (R2).

The enzyme catalyses carbamoyl phosphate + L-aspartate = N-carbamoyl-L-aspartate + phosphate + H(+). The protein operates within pyrimidine metabolism; UMP biosynthesis via de novo pathway; (S)-dihydroorotate from bicarbonate: step 2/3. In terms of biological role, catalyzes the condensation of carbamoyl phosphate and aspartate to form carbamoyl aspartate and inorganic phosphate, the committed step in the de novo pyrimidine nucleotide biosynthesis pathway. In Limosilactobacillus reuteri subsp. reuteri (strain JCM 1112) (Lactobacillus reuteri), this protein is Aspartate carbamoyltransferase catalytic subunit.